We begin with the raw amino-acid sequence, 556 residues long: Adenine deaminase (556 aa).

This sequence belongs to the metallo-dependent hydrolases superfamily. Adenine deaminase family. Mn(2+) serves as cofactor.

It carries out the reaction adenine + H2O + H(+) = hypoxanthine + NH4(+). This chain is Adenine deaminase, found in Methanocaldococcus jannaschii (strain ATCC 43067 / DSM 2661 / JAL-1 / JCM 10045 / NBRC 100440) (Methanococcus jannaschii).